The following is a 508-amino-acid chain: DASH complex subunit ASK1 (508 aa).

Disordered regions lie at residues 86–138 (LVDG…TLSS) and 150–355 (SRAA…QLRS). Polar residues predominate over residues 116–138 (EPSQYTPRPQTSAGGHDTTTLSS). The segment covering 161–175 (QHHDDSSVLTDRDGD) has biased composition (basic and acidic residues). Positions 201 to 213 (DEMDIDMDEEDSE) are enriched in acidic residues. Over residues 229-238 (RYYDDDHGFE) the composition is skewed to basic and acidic residues. The segment covering 239–258 (QGEEEEDEEEEEEEEEEEEG) has biased composition (acidic residues). The span at 326 to 338 (IKQEDTEKKRPLW) shows a compositional bias: basic and acidic residues.

This sequence belongs to the DASH complex ASK1 family. Component of the DASH complex consisting of ASK1, DAD1, DAD2, DAD3, DAD4, DAM1, DUO1, HSK3, SPC19 and SPC34, with a stoichiometry of one copy of each subunit per complex. Multiple DASH complexes oligomerize to form a ring that encircles spindle microtubules and organizes the rod-like NDC80 complexes of the outer kinetochore. On cytoplasmic microtubules, DASH complexes appear to form patches instead of rings.

The protein localises to the chromosome. It localises to the centromere. The protein resides in the kinetochore. It is found in the cytoplasm. Its subcellular location is the cytoskeleton. The protein localises to the spindle. It localises to the nucleus. In terms of biological role, component of the DASH complex that connects microtubules with kinetochores and couples microtubule depolymerisation to chromosome movement; it is involved in retrieving kinetochores to the spindle poles before their re-orientation on the spindle in early mitosis and allows microtubule depolymerization to pull chromosomes apart and resist detachment during anaphase. Kinetochores, consisting of a centromere-associated inner segment and a microtubule-contacting outer segment, play a crucial role in chromosome segregation by mediating the physical connection between centromeric DNA and microtubules. Kinetochores also serve as an input point for the spindle assembly checkpoint, which delays anaphase until all chromosomes have bioriented on the mitotic spindle. This Chaetomium thermophilum (strain DSM 1495 / CBS 144.50 / IMI 039719) (Thermochaetoides thermophila) protein is DASH complex subunit ASK1.